Reading from the N-terminus, the 174-residue chain is uncharacterized protein (174 aa).

This is an uncharacterized protein from Saccharomyces cerevisiae (strain ATCC 204508 / S288c) (Baker's yeast).